An 85-amino-acid chain; its full sequence is Cytochrome b (85 aa).

3 helical membrane passes run 1–8 (LTGLFLAM), 32–53 (WLIRNIHANGASFFFICIYLHI), and 68–85 (WNVGVVLLLLVMMTAFVG). H38 and H52 together coordinate heme b.

It belongs to the cytochrome b family. The cytochrome bc1 complex contains 3 respiratory subunits (MT-CYB, CYC1 and UQCRFS1), 2 core proteins (UQCRC1 and UQCRC2) and probably 6 low-molecular weight proteins. Heme b is required as a cofactor.

The protein localises to the mitochondrion inner membrane. Its function is as follows. Component of the ubiquinol-cytochrome c reductase complex (complex III or cytochrome b-c1 complex) that is part of the mitochondrial respiratory chain. The b-c1 complex mediates electron transfer from ubiquinol to cytochrome c. Contributes to the generation of a proton gradient across the mitochondrial membrane that is then used for ATP synthesis. The polypeptide is Cytochrome b (mt-cyb) (Pomoxis nigromaculatus (Black crappie)).